A 526-amino-acid chain; its full sequence is Lysine--tRNA ligase (526 aa).

Positions 431 and 438 each coordinate Mg(2+).

This sequence belongs to the class-II aminoacyl-tRNA synthetase family. In terms of assembly, homodimer. Mg(2+) is required as a cofactor.

Its subcellular location is the cytoplasm. It carries out the reaction tRNA(Lys) + L-lysine + ATP = L-lysyl-tRNA(Lys) + AMP + diphosphate. The polypeptide is Lysine--tRNA ligase (lysS) (Chlamydia trachomatis serovar D (strain ATCC VR-885 / DSM 19411 / UW-3/Cx)).